Here is a 1163-residue protein sequence, read N- to C-terminus: Genome polyprotein (1163 aa).

The Cytoplasmic segment spans residues 1–104 (MSGRKAQGKT…LSSRKRRSYE (104 aa)). The interval 38–72 (PGPSRGVQGFIFFFLFNVLTGRKITAHLKKLWRML) is hydrophobic; homodimerization of capsid protein C. The propeptide at 102 to 121 (SYEVLTVQFLILGMLLMTGG) is ER anchor for the capsid protein C, removed in mature form by serine protease NS3. The chain crosses the membrane as a helical span at residues 105 to 125 (VLTVQFLILGMLLMTGGVTLV). The Extracellular segment spans residues 126-244 (RKSRWLLLNV…GERQLQKIER (119 aa)). N-linked (GlcNAc...) asparagine; by host glycosylation is found at Asn134 and Asn150. Residues 245–265 (WLVRNPFFAVTALAIAYLVGS) traverse the membrane as a helical segment. The Cytoplasmic segment spans residues 266-270 (NMTQR). A helical transmembrane segment spans residues 271–285 (VVIALLVLAVGPAYS). The Extracellular segment spans residues 286-730 (AHCIGITDRD…MVFGSAFQGL (445 aa)). 6 disulfide bridges follow: Cys288/Cys315, Cys345/Cys406, Cys359/Cys390, Cys377/Cys401, Cys467/Cys568, and Cys585/Cys615. A fusion peptide region spans residues 383–396 (DRGWGNGCGLFGKG). The helical transmembrane segment at 731–751 (FGGLSWITKVIMGAVLIWVGI) threads the bilayer. Over 752 to 757 (NMRNMT) the chain is Extracellular. Residues 758-778 (MSMSMILVGVIMMFLSLGVGA) traverse the membrane as a helical segment. Over 779–1163 (DQGCAINFGK…RQGPKQILVG (385 aa)) the chain is Extracellular. 6 disulfides stabilise this stretch: Cys782/Cys793, Cys833/Cys921, Cys957/Cys1002, Cys1058/Cys1107, Cys1069/Cys1091, and Cys1090/Cys1094. 2 N-linked (GlcNAc...) asparagine; by host glycosylation sites follow: Asn908 and Asn986.

As to quaternary structure, homodimer. Interacts (via N-terminus) with host EXOC1 (via C-terminus); this interaction results in EXOC1 degradation through the proteasome degradation pathway. Forms heterodimers with envelope protein E in the endoplasmic reticulum and Golgi. In terms of assembly, homodimer; in the endoplasmic reticulum and Golgi. As to quaternary structure, homodimer; Homohexamer when secreted. Interacts with envelope protein E. In terms of processing, specific enzymatic cleavages in vivo yield mature proteins. The nascent capsid protein C contains a C-terminal hydrophobic domain that act as a signal sequence for translocation of prM into the lumen of the ER. Mature capsid protein C is cleaved at a site upstream of this hydrophobic domain by NS3. prM is cleaved in post-Golgi vesicles by a host furin, releasing the mature small envelope protein M, and peptide pr. Non-structural protein 2A-alpha, a C-terminally truncated form of non-structural protein 2A, results from partial cleavage by NS3. Specific enzymatic cleavages in vivo yield mature proteins peptide 2K acts as a signal sequence and is removed from the N-terminus of NS4B by the host signal peptidase in the ER lumen. Signal cleavage at the 2K-4B site requires a prior NS3 protease-mediated cleavage at the 4A-2K site. Cleaved in post-Golgi vesicles by a host furin, releasing the mature small envelope protein M, and peptide pr. This cleavage is incomplete as up to 30% of viral particles still carry uncleaved prM. Post-translationally, N-glycosylated. In terms of processing, N-glycosylated. The excreted form is glycosylated and this is required for efficient secretion of the protein from infected cells.

Its subcellular location is the virion. It localises to the host nucleus. The protein localises to the host cytoplasm. The protein resides in the host perinuclear region. It is found in the secreted. Its subcellular location is the virion membrane. It localises to the host endoplasmic reticulum membrane. Plays a role in virus budding by binding to the cell membrane and gathering the viral RNA into a nucleocapsid that forms the core of a mature virus particle. During virus entry, may induce genome penetration into the host cytoplasm after hemifusion induced by the surface proteins. Can migrate to the cell nucleus where it modulates host functions. Its function is as follows. Inhibits RNA silencing by interfering with host Dicer. In terms of biological role, prevents premature fusion activity of envelope proteins in trans-Golgi by binding to envelope protein E at pH6.0. After virion release in extracellular space, gets dissociated from E dimers. Functionally, acts as a chaperone for envelope protein E during intracellular virion assembly by masking and inactivating envelope protein E fusion peptide. prM is the only viral peptide matured by host furin in the trans-Golgi network probably to avoid catastrophic activation of the viral fusion activity in acidic Golgi compartment prior to virion release. prM-E cleavage is inefficient, and many virions are only partially matured. These uncleaved prM would play a role in immune evasion. May play a role in virus budding. Exerts cytotoxic effects by activating a mitochondrial apoptotic pathway through M ectodomain. May display a viroporin activity. Its function is as follows. Binds to host cell surface receptor and mediates fusion between viral and cellular membranes. Envelope protein is synthesized in the endoplasmic reticulum in the form of heterodimer with protein prM. They play a role in virion budding in the ER, and the newly formed immature particle is covered with 60 spikes composed of heterodimer between precursor prM and envelope protein E. The virion is transported to the Golgi apparatus where the low pH causes dissociation of PrM-E heterodimers and formation of E homodimers. prM-E cleavage is inefficient, and many virions are only partially matured. These uncleaved prM would play a role in immune evasion. In terms of biological role, involved in immune evasion, pathogenesis and viral replication. Once cleaved off the polyprotein, is targeted to three destinations: the viral replication cycle, the plasma membrane and the extracellular compartment. Essential for viral replication. Required for formation of the replication complex and recruitment of other non-structural proteins to the ER-derived membrane structures. Excreted as a hexameric lipoparticle that plays a role against host immune response. Antagonizing the complement function. Binds to the host macrophages and dendritic cells. Inhibits signal transduction originating from Toll-like receptor 3 (TLR3). Functionally, component of the viral RNA replication complex that functions in virion assembly and antagonizes the host immune response. This is Genome polyprotein from Aedes aegypti (Yellowfever mosquito).